A 478-amino-acid chain; its full sequence is Shikimate biosynthesis protein AroDE (478 aa).

The segment at 1 to 208 (MLCTIIRGPS…LNHHYFYNFT (208 aa)) is 3-dehydroquinate dehydratase. 3-dehydroquinate-binding positions include serine 21, 29–31 (EMR), and 55–57 (TWK). Histidine 110 acts as the Proton donor/acceptor; for 3-dehydroquinate dehydratase activity in catalysis. The Schiff-base intermediate with substrate; for 3-dehydroquinate dehydratase activity role is filled by lysine 133. Arginine 171 and glutamine 196 together coordinate 3-dehydroquinate. The tract at residues 209-478 (NLSPQSQICA…VLASLFSIAA (270 aa)) is shikimate 5-dehydrogenase. Position 226 to 228 (226 to 228 (SIG)) interacts with shikimate. Lysine 277 acts as the Proton acceptor; for shikimate dehydrogenase activity in catalysis. The shikimate site is built by asparagine 298 and aspartate 313. NADP(+) contacts are provided by residues 337 to 341 (GAGGA), 360 to 362 (NRT), and glycine 435. Glutamine 442 is a binding site for shikimate.

In the N-terminal section; belongs to the type-I 3-dehydroquinase family. The protein in the C-terminal section; belongs to the shikimate dehydrogenase family.

It carries out the reaction 3-dehydroquinate = 3-dehydroshikimate + H2O. It catalyses the reaction shikimate + NADP(+) = 3-dehydroshikimate + NADPH + H(+). It functions in the pathway metabolic intermediate biosynthesis; chorismate biosynthesis; chorismate from D-erythrose 4-phosphate and phosphoenolpyruvate: step 3/7. Its pathway is metabolic intermediate biosynthesis; chorismate biosynthesis; chorismate from D-erythrose 4-phosphate and phosphoenolpyruvate: step 4/7. Bifunctional enzyme that catalyzes two sequential steps of the aromatic amino acids biosynthetic pathway. In the first reaction, the AroD domain catalyzes the cis-dehydration of 3-dehydroquinate (DHQ) and introduces the first double bond of the aromatic ring to yield 3-dehydroshikimate; in the second reaction, the AroE domain catalyzes the reversible NADPH linked reduction of 3-dehydroshikimate (DHSA) to yield shikimate (SA). This chain is Shikimate biosynthesis protein AroDE, found in Chlamydia muridarum (strain MoPn / Nigg).